The sequence spans 435 residues: 3-ketoacyl-CoA thiolase (435 aa).

The Acyl-thioester intermediate role is filled by C98. Active-site proton acceptor residues include H391 and C421.

It belongs to the thiolase-like superfamily. Thiolase family. Heterotetramer of two alpha chains (FadJ) and two beta chains (FadI).

It localises to the cytoplasm. It catalyses the reaction an acyl-CoA + acetyl-CoA = a 3-oxoacyl-CoA + CoA. The protein operates within lipid metabolism; fatty acid beta-oxidation. Its function is as follows. Catalyzes the final step of fatty acid oxidation in which acetyl-CoA is released and the CoA ester of a fatty acid two carbons shorter is formed. This chain is 3-ketoacyl-CoA thiolase, found in Vibrio cholerae serotype O1 (strain ATCC 39315 / El Tor Inaba N16961).